Here is a 70-residue protein sequence, read N- to C-terminus: Large ribosomal subunit protein bL31 (70 aa).

Positions 16, 18, 37, and 40 each coordinate Zn(2+).

This sequence belongs to the bacterial ribosomal protein bL31 family. Type A subfamily. Part of the 50S ribosomal subunit. Zn(2+) is required as a cofactor.

Its function is as follows. Binds the 23S rRNA. This chain is Large ribosomal subunit protein bL31, found in Actinobacillus pleuropneumoniae serotype 5b (strain L20).